Reading from the N-terminus, the 898-residue chain is Chloride channel protein 2 (898 aa).

Topologically, residues 1–90 (MAAPAAAAVE…RCHKFLVSRV (90 aa)) are cytoplasmic. The tract at residues 19–37 (QYEQTLMYGRYTQDLGAFA) is essential for channel gating by both voltage and cell volume. Residue Thr23 is modified to Phosphothreonine. The modulates channel gating by both voltage and cell volume stretch occupies residues 39-52 (EEAARIRLGGPEPW). 2 consecutive transmembrane segments (helical) span residues 91-124 (GEDW…AQQW) and 133-158 (LLLQ…TQIL). The short motif at 164–168 (GSGIP) is the Selectivity filter part_1 element. The segment at residues 167-174 (IPEMKTIL) is an intramembrane region (helical). The next 2 helical transmembrane spans lie at 183 to 201 (LTLK…ALGS) and 208 to 226 (EGPF…SKFL). Positions 206–210 (GKEGP) match the Selectivity filter part_2 motif. 2 intramembrane regions (helical) span residues 242–254 (MLAA…VGCC) and 258–266 (PIGGVLFSI). Helical transmembrane passes span 278–298 (YWRG…LAVW), 324–352 (LPAF…VQVM), 361–380 (FLMR…ISTL), 432–452 (ANVF…SALA), and 460–483 (GAFM…MAAW). The short motif at 460 to 464 (GAFMP) is the Selectivity filter part_3 element. Residues 500-514 (GGYAVVGAAALAGAV) constitute an intramembrane region (helical). The note=Loop between two helices intramembrane region spans 515-516 (TH). The helical intramembrane region spans 517–528 (TVSTAVIVFELT). Positions 529–533 (GQIAH) form an intramembrane region, note=Loop between two helices. Residues 534-551 (ILPVMIAVILANAVAQSL) traverse the membrane as a helical segment. Residues 552 to 898 (QPSLYDSIIR…SPSDSDDKCQ (347 aa)) are Cytoplasmic-facing. The CBS 1 domain occupies 587-645 (MVRDVPHVALSCTFRDLRLALHRTKGRTLALVESPESMILLGSIERTQVVALLAAQLSP). Residues 647–658 (RRRQSKQKRRVA) show a composition bias toward basic residues. The interval 647 to 675 (RRRQSKQKRRVAHTSPPSCQESPPSPETS) is disordered. Position 710 is a phosphoserine (Ser710). The interval 726–766 (FCGSPPPEAASESEKSESSEKRKSKRVRISLASDSDLEGEM) is disordered. A compositionally biased stretch (basic and acidic residues) spans 737 to 746 (ESEKSESSEK). Ser758 bears the Phosphoserine mark. Positions 790-850 (IDPAPFQLVE…GSVTAQGVKV (61 aa)) constitute a CBS 2 domain. Residues 812-813 (LL) carry the Basolateral membrane sorting motif. The segment at 856-898 (SFRDSATSSSDTETTEVHALWGPRSRHGLPREGSPSDSDDKCQ) is disordered.

It belongs to the chloride channel (TC 2.A.49) family. ClC-2/CLCN2 subfamily. Homodimer. Interacts with auxiliary subunit HEPACAM. Post-translationally, phosphorylated. Activated by dephosphorylation. In terms of tissue distribution, ubiquitously expressed.

It is found in the cell membrane. The protein localises to the basolateral cell membrane. The protein resides in the cell projection. Its subcellular location is the dendritic spine membrane. It localises to the axon. It carries out the reaction chloride(in) = chloride(out). The catalysed reaction is thiocyanate(in) = thiocyanate(out). The enzyme catalyses bromide(in) = bromide(out). It catalyses the reaction nitrate(in) = nitrate(out). It carries out the reaction iodide(out) = iodide(in). Its activity is regulated as follows. Common gate kinetics are down-regulated by intracellular ATP. Inhibited by AK-42, a derivative of meclofenamate. Inhibited by Cd(2+). Inhibited by Zn(2+) and PKC activation. Inhibited at acidic pH. CCLN2:HEPACAM channel conductance is up-regulated upon hypo-osmolarity. Voltage-gated and osmosensitive chloride channel. Forms a homodimeric channel where each subunit has its own ion conduction pathway. Conducts double-barreled currents controlled by two types of gates, two fast glutamate gates that control each subunit independently and a slow common gate that opens and shuts off both subunits simultaneously. Displays inward rectification currents activated upon membrane hyperpolarization and extracellular hypotonicity. Contributes to chloride conductance involved in neuron excitability. In hippocampal neurons, generates a significant part of resting membrane conductance and provides an additional chloride efflux pathway to prevent chloride accumulation in dendrites upon GABA receptor activation. In glia, associates with the auxiliary subunit HEPACAM/GlialCAM at astrocytic processes and myelinated fiber tracts where it may regulate transcellular chloride flux buffering extracellular chloride and potassium concentrations. Regulates aldosterone production in adrenal glands. The opening of CLCN2 channels at hyperpolarized membrane potentials in the glomerulosa causes cell membrane depolarization, activation of voltage-gated calcium channels and increased expression of aldosterone synthase, the rate-limiting enzyme for aldosterone biosynthesis. Contributes to chloride conductance in retinal pigment epithelium involved in phagocytosis of shed photoreceptor outer segments and photoreceptor renewal. Conducts chloride currents at the basolateral membrane of epithelial cells with a role in chloride reabsorption rather than secretion. Permeable to small monovalent anions with chloride &gt; thiocyanate &gt; bromide &gt; nitrate &gt; iodide ion selectivity. The sequence is that of Chloride channel protein 2 (CLCN2) from Oryctolagus cuniculus (Rabbit).